Reading from the N-terminus, the 143-residue chain is Hemoglobin subunit alpha (143 aa).

Ser1 is modified (N-acetylserine). The Globin domain maps to 1–143; the sequence is SLSATDKARV…LALALSEKYR (143 aa). His60 provides a ligand contact to O2. His89 is a binding site for heme b.

Belongs to the globin family. As to quaternary structure, heterotetramer of two alpha chains and two beta chains. As to expression, red blood cells.

In terms of biological role, involved in oxygen transport from gills to the various peripheral tissues. This Leiostomus xanthurus (Spot) protein is Hemoglobin subunit alpha (hba).